Here is a 119-residue protein sequence, read N- to C-terminus: Large ribosomal subunit protein bL20 (119 aa).

This sequence belongs to the bacterial ribosomal protein bL20 family.

In terms of biological role, binds directly to 23S ribosomal RNA and is necessary for the in vitro assembly process of the 50S ribosomal subunit. It is not involved in the protein synthesizing functions of that subunit. The sequence is that of Large ribosomal subunit protein bL20 from Brevibacillus brevis (strain 47 / JCM 6285 / NBRC 100599).